The primary structure comprises 92 residues: Small ribosomal subunit protein uS19 (92 aa).

Belongs to the universal ribosomal protein uS19 family.

Functionally, protein S19 forms a complex with S13 that binds strongly to the 16S ribosomal RNA. The sequence is that of Small ribosomal subunit protein uS19 from Chromobacterium violaceum (strain ATCC 12472 / DSM 30191 / JCM 1249 / CCUG 213 / NBRC 12614 / NCIMB 9131 / NCTC 9757 / MK).